Consider the following 607-residue polypeptide: Threonine--tRNA ligase (607 aa).

The editing domain stretch occupies residues M1 to A143. Catalytic regions lie at residues P193–P489 and R194–P489. The Zn(2+) site is built by C286, H337, and H458.

The protein belongs to the class-II aminoacyl-tRNA synthetase family. As to quaternary structure, homodimer. Requires Zn(2+) as cofactor.

The protein resides in the cytoplasm. It catalyses the reaction tRNA(Thr) + L-threonine + ATP = L-threonyl-tRNA(Thr) + AMP + diphosphate + H(+). Catalyzes the attachment of threonine to tRNA(Thr) in a two-step reaction: L-threonine is first activated by ATP to form Thr-AMP and then transferred to the acceptor end of tRNA(Thr). Also edits incorrectly charged L-seryl-tRNA(Thr). The polypeptide is Threonine--tRNA ligase (Pyrobaculum calidifontis (strain DSM 21063 / JCM 11548 / VA1)).